A 393-amino-acid polypeptide reads, in one-letter code: Glutamate 5-kinase (393 aa).

Lys17 serves as a coordination point for ATP. Positions 57, 144, and 156 each coordinate substrate. 176 to 177 (SD) contributes to the ATP binding site. A PUA domain is found at 282–359 (AGSIAIDAGA…AEIAAILGYA (78 aa)). The interval 374 to 393 (APSGARSEEGGNEKKGKLHA) is disordered. Positions 379–393 (RSEEGGNEKKGKLHA) are enriched in basic and acidic residues.

Belongs to the glutamate 5-kinase family.

Its subcellular location is the cytoplasm. The enzyme catalyses L-glutamate + ATP = L-glutamyl 5-phosphate + ADP. It functions in the pathway amino-acid biosynthesis; L-proline biosynthesis; L-glutamate 5-semialdehyde from L-glutamate: step 1/2. Catalyzes the transfer of a phosphate group to glutamate to form L-glutamate 5-phosphate. The polypeptide is Glutamate 5-kinase (Sinorhizobium fredii (strain NBRC 101917 / NGR234)).